Consider the following 78-residue polypeptide: Large ribosomal subunit protein uL29 (78 aa).

It belongs to the universal ribosomal protein uL29 family.

This Salinispora arenicola (strain CNS-205) protein is Large ribosomal subunit protein uL29.